A 401-amino-acid chain; its full sequence is Putative phosphatidylinositol 4-phosphate 5-kinase 11 (401 aa).

Residues 1-390 (MELRATVENR…RFQDFVSNIF (390 aa)) enclose the PIPK domain. Polar residues predominate over residues 242–260 (SFKSNSTKSMKTASSSPDR). The tract at residues 242–268 (SFKSNSTKSMKTASSSPDRSSVAMYSC) is disordered. The interval 350-371 (YGMKKRIEHCYKSIQYNSNSIS) is activation loop.

The enzyme catalyses a 1,2-diacyl-sn-glycero-3-phospho-(1D-myo-inositol 4-phosphate) + ATP = a 1,2-diacyl-sn-glycero-3-phospho-(1D-myo-inositol-4,5-bisphosphate) + ADP + H(+). In Arabidopsis thaliana (Mouse-ear cress), this protein is Putative phosphatidylinositol 4-phosphate 5-kinase 11 (PIP5K11).